We begin with the raw amino-acid sequence, 541 residues long: Metal transporter Nramp6 (541 aa).

The span at 1–18 (MAPLPAAATATASSAATP) shows a compositional bias: low complexity. A disordered region spans residues 1-44 (MAPLPAAATATASSAATPADDEAHSLLPSTPSNEEDDDDLEERA). 12 helical membrane-spanning segments follow: residues 87–107 (LWLFTGPGFLMSIAFLDPGNL), 120–140 (TLLWLLLWATSMGLLVQLLAA), 172–192 (VAMVGADIQEVIGSAIAIKIL), 196–216 (FLPLWAGVVITALDCFIFLSL), 224–244 (LEAVFAILIATMAVSFAWMFT), 270–290 (AVGVVGCVIMPHNVFLHSALV), 316–336 (IALAVSFMINLFVTTVFAKGF), 358–378 (FGGGFFPILYIWGIGLLAAGQ), 404–424 (IRSLITRSFAIVPTIIVALFF), 436–456 (WLNVLQSIQIPFALIPLITLV), 474–494 (VTWTVATLLITINGYLLLDFF), and 502–522 (LSGSILCVAVLAYASFVLYLI).

The protein belongs to the NRAMP (TC 2.A.55) family.

The protein resides in the membrane. Its function is as follows. Probable metal transporter. In Oryza sativa subsp. japonica (Rice), this protein is Metal transporter Nramp6 (NRAMP6).